Reading from the N-terminus, the 363-residue chain is MSKNYHIAVLPGDGIGPEVMTQALKVLDAVRNRFAMRITTSHYDVGGAAIDNHGQPLPPATVEGCEQADAVLFGSVGGPKWEHLPPDQQPERGALLPLRKHFKLFSNLRPAKLYQGLEAFCPLRADIAANGFDILCVRELTGGIYFGQPKGREGSGQYEKAFDTEVYHRFEIERIARIAFESARKRRHKVTSIDKANVLQSSILWREIVNEIATEYPDVELAHMYIDNATMQLIKDPSQFDVLLCSNLFGDILSDECAMITGSMGMLPSASLNEQGFGLYEPAGGSAPDITGKNIANPIAQILSLALLLRYSLDADDAACAIERAINRALEEGIRTGDLARGAAAVSTDEMGDIIARYVAEGV.

78 to 91 (GPKWEHLPPDQQPE) is a binding site for NAD(+). Residues R99, R109, R138, and D227 each coordinate substrate. The Mg(2+) site is built by D227, D251, and D255. 285–297 (GSAPDITGKNIAN) contacts NAD(+).

Belongs to the isocitrate and isopropylmalate dehydrogenases family. LeuB type 1 subfamily. In terms of assembly, homodimer. Mg(2+) serves as cofactor. Mn(2+) is required as a cofactor.

It localises to the cytoplasm. It carries out the reaction (2R,3S)-3-isopropylmalate + NAD(+) = 4-methyl-2-oxopentanoate + CO2 + NADH. Its pathway is amino-acid biosynthesis; L-leucine biosynthesis; L-leucine from 3-methyl-2-oxobutanoate: step 3/4. Catalyzes the oxidation of 3-carboxy-2-hydroxy-4-methylpentanoate (3-isopropylmalate) to 3-carboxy-4-methyl-2-oxopentanoate. The product decarboxylates to 4-methyl-2 oxopentanoate. The polypeptide is 3-isopropylmalate dehydrogenase (Shigella boydii serotype 4 (strain Sb227)).